The chain runs to 478 residues: NADH-quinone oxidoreductase subunit N (478 aa).

13 helical membrane passes run 8–28, 38–58, 62–82, 106–126, 160–180, 200–220, 234–254, 268–288, 300–320, 322–342, 368–388, 398–418, and 445–465; these read LVLPEVLLAIYAMGVLLFGVW, ILWASAVTMLALALIIGLGTG, AFGGLFIADGFARFSKVVILV, PILIVLAVVGMMMMVSAGDLM, FVLGSLSSGLLLYGASLVYGF, IGLLFGLVFLLAGLAFKVSAV, PTPVTAFFATAPKLAAMALIA, WGQILAALALASMYLGAIAGI, SSISHMGFGLLGLAAGTAAGV, SMLLYMTIYIVMNVGTFAFIL, AFALLVLLFSLAGVPPMLGFF, IGAGFVWVPVAAVVASVIGAF, and FAFLVLAAVAMLGGAINMAGV.

It belongs to the complex I subunit 2 family. In terms of assembly, NDH-1 is composed of 14 different subunits. Subunits NuoA, H, J, K, L, M, N constitute the membrane sector of the complex.

Its subcellular location is the cellular chromatophore membrane. It carries out the reaction a quinone + NADH + 5 H(+)(in) = a quinol + NAD(+) + 4 H(+)(out). NDH-1 shuttles electrons from NADH, via FMN and iron-sulfur (Fe-S) centers, to quinones in the respiratory chain. The immediate electron acceptor for the enzyme in this species is believed to be ubiquinone. Couples the redox reaction to proton translocation (for every two electrons transferred, four hydrogen ions are translocated across the cytoplasmic membrane), and thus conserves the redox energy in a proton gradient. The chain is NADH-quinone oxidoreductase subunit N from Rhodobacter capsulatus (Rhodopseudomonas capsulata).